The primary structure comprises 104 residues: Co-chaperonin GroES 3 (104 aa).

It belongs to the GroES chaperonin family. Heptamer of 7 subunits arranged in a ring. Interacts with the chaperonin GroEL.

It is found in the cytoplasm. In terms of biological role, together with the chaperonin GroEL, plays an essential role in assisting protein folding. The GroEL-GroES system forms a nano-cage that allows encapsulation of the non-native substrate proteins and provides a physical environment optimized to promote and accelerate protein folding. GroES binds to the apical surface of the GroEL ring, thereby capping the opening of the GroEL channel. In Bradyrhizobium diazoefficiens (strain JCM 10833 / BCRC 13528 / IAM 13628 / NBRC 14792 / USDA 110), this protein is Co-chaperonin GroES 3.